The chain runs to 429 residues: 3-phosphoshikimate 1-carboxyvinyltransferase (429 aa).

Positions 11, 12, and 16 each coordinate 3-phosphoshikimate. Lys-11 serves as a coordination point for phosphoenolpyruvate. 2 residues coordinate phosphoenolpyruvate: Gly-82 and Arg-110. 3-phosphoshikimate-binding residues include Ser-155, Gln-157, Asp-302, and Lys-329. Gln-157 is a phosphoenolpyruvate binding site. Asp-302 serves as the catalytic Proton acceptor. 2 residues coordinate phosphoenolpyruvate: Arg-333 and Arg-385.

The protein belongs to the EPSP synthase family. As to quaternary structure, monomer.

The protein resides in the cytoplasm. It carries out the reaction 3-phosphoshikimate + phosphoenolpyruvate = 5-O-(1-carboxyvinyl)-3-phosphoshikimate + phosphate. It functions in the pathway metabolic intermediate biosynthesis; chorismate biosynthesis; chorismate from D-erythrose 4-phosphate and phosphoenolpyruvate: step 6/7. Catalyzes the transfer of the enolpyruvyl moiety of phosphoenolpyruvate (PEP) to the 5-hydroxyl of shikimate-3-phosphate (S3P) to produce enolpyruvyl shikimate-3-phosphate and inorganic phosphate. The polypeptide is 3-phosphoshikimate 1-carboxyvinyltransferase (Helicobacter pylori (strain J99 / ATCC 700824) (Campylobacter pylori J99)).